Here is a 121-residue protein sequence, read N- to C-terminus: UPF0145 protein SGR_4080 (121 aa).

The protein belongs to the UPF0145 family.

The polypeptide is UPF0145 protein SGR_4080 (Streptomyces griseus subsp. griseus (strain JCM 4626 / CBS 651.72 / NBRC 13350 / KCC S-0626 / ISP 5235)).